An 81-amino-acid chain; its full sequence is Antimicrobial peptide D1 (81 aa).

The N-terminal stretch at 1–31 (MAKTVLGIHVTFLTLLFAVLLLNDVMYTPVE) is a signal peptide. 4 disulfides stabilise this stretch: Cys-34/Cys-81, Cys-45/Cys-66, Cys-51/Cys-75, and Cys-55/Cys-77.

Functionally, antimicrobial peptide probably active against fungi like B.sorokiniana, F.oxysporum, F.graminearum, F.avenaceum, B.cinerea, P.beta, P.infestans and P.debaryanum. In Stellaria media (Common chickweed), this protein is Antimicrobial peptide D1.